The chain runs to 210 residues: Frataxin, mitochondrial (210 aa).

Residues 1 to 41 (MWTLGRRAVAGLLASPSPAQAQTLTRVPRPAELAPLCGRRG) constitute a mitochondrion transit peptide.

The protein belongs to the frataxin family. In terms of assembly, component of the mitochondrial core iron-sulfur cluster (ISC) complex composed of NFS1, LYRM4, NDUFAB1, ISCU, FXN, and FDX2; this complex is a heterohexamer containing two copies of each monomer. Homodimer. Monomer (probable predominant form). Oligomer. Monomers and polymeric aggregates of &gt;1 MDa have been isolated from mitochondria. A small fraction of heterologous overexpressed recombinant frataxin forms high-molecular weight aggregates that incorporate iron. Interacts with LYRM4. Interacts (via ferrous form) with ISCU; the interaction is possible when both are bound to the dimeric form of the cysteine desulfurase complex (NFS1:LYRM4) and the interaction enhances FXN interaction to the dimeric form of the cysteine desulfurase complex (NFS1:LYRM4). Interacts with FECH; one iron-bound FXN monomer seems to interact with a FECH homodimer. Interacts with SDHA and SDHB. Interacts with ACO2; the interaction is dependent on citrate. Interacts with HSPA9. As to quaternary structure, interacts with ACO1. Interacts with ISCU (cytoplasmic form). Post-translationally, processed in two steps by mitochondrial processing peptidase (MPP). MPP first cleaves the precursor to intermediate form and subsequently converts the intermediate to yield frataxin mature form (frataxin(81-210)) which is the predominant form. The additional forms, frataxin(56-210) and frataxin(78-210), seem to be produced when the normal maturation process is impaired; their physiological relevance is unsure. In terms of tissue distribution, expressed in the heart, peripheral blood lymphocytes and dermal fibroblasts.

Its subcellular location is the mitochondrion. It is found in the cytoplasm. It localises to the cytosol. The enzyme catalyses 4 Fe(2+) + O2 + 4 H(+) = 4 Fe(3+) + 2 H2O. Its function is as follows. Functions as an activator of persulfide transfer to the scaffoding protein ISCU as component of the core iron-sulfur cluster (ISC) assembly complex and participates to the [2Fe-2S] cluster assembly. Accelerates sulfur transfer from NFS1 persulfide intermediate to ISCU and to small thiols such as L-cysteine and glutathione leading to persulfuration of these thiols and ultimately sulfide release. Binds ferrous ion and is released from FXN upon the addition of both L-cysteine and reduced FDX2 during [2Fe-2S] cluster assembly. The core iron-sulfur cluster (ISC) assembly complex is involved in the de novo synthesis of a [2Fe-2S] cluster, the first step of the mitochondrial iron-sulfur protein biogenesis. This process is initiated by the cysteine desulfurase complex (NFS1:LYRM4:NDUFAB1) that produces persulfide which is delivered on the scaffold protein ISCU in a FXN-dependent manner. Then this complex is stabilized by FDX2 which provides reducing equivalents to accomplish the [2Fe-2S] cluster assembly. Finally, the [2Fe-2S] cluster is transferred from ISCU to chaperone proteins, including HSCB, HSPA9 and GLRX5. May play a role in the protection against iron-catalyzed oxidative stress through its ability to catalyze the oxidation of Fe(2+) to Fe(3+); the oligomeric form but not the monomeric form has in vitro ferroxidase activity. May be able to store large amounts of iron in the form of a ferrihydrite mineral by oligomerization; however, the physiological relevance is unsure as reports are conflicting and the function has only been shown using heterologous overexpression systems. May function as an iron chaperone protein that protects the aconitase [4Fe-4S]2+ cluster from disassembly and promotes enzyme reactivation. May play a role as a high affinity iron binding partner for FECH that is capable of both delivering iron to ferrochelatase and mediating the terminal step in mitochondrial heme biosynthesis. In terms of biological role, modulates the RNA-binding activity of ACO1. May be involved in the cytoplasmic iron-sulfur protein biogenesis. May contribute to oxidative stress resistance and overall cell survival. The chain is Frataxin, mitochondrial from Homo sapiens (Human).